Reading from the N-terminus, the 438-residue chain is tRNA modification GTPase MnmE (438 aa).

3 residues coordinate (6S)-5-formyl-5,6,7,8-tetrahydrofolate: arginine 19, glutamate 76, and lysine 115. Residues 211 to 363 (GYKVAIIGRP…LSKELESYLN (153 aa)) form the TrmE-type G domain. Residues 221–226 (NVGKSS), 240–246 (SETAGTT), and 265–268 (DTAG) contribute to the GTP site. Mg(2+) is bound by residues serine 225 and threonine 246. Position 438 (lysine 438) interacts with (6S)-5-formyl-5,6,7,8-tetrahydrofolate.

This sequence belongs to the TRAFAC class TrmE-Era-EngA-EngB-Septin-like GTPase superfamily. TrmE GTPase family. Homodimer. Heterotetramer of two MnmE and two MnmG subunits. The cofactor is K(+).

The protein localises to the cytoplasm. In terms of biological role, exhibits a very high intrinsic GTPase hydrolysis rate. Involved in the addition of a carboxymethylaminomethyl (cmnm) group at the wobble position (U34) of certain tRNAs, forming tRNA-cmnm(5)s(2)U34. This is tRNA modification GTPase MnmE from Campylobacter fetus subsp. fetus (strain 82-40).